The following is a 311-amino-acid chain: Ornithine carbamoyltransferase (311 aa).

Carbamoyl phosphate contacts are provided by residues 59 to 62 (STRT), Q86, R110, and 137 to 140 (HPCQ). Residues N168, D228, and 232–233 (SM) contribute to the L-ornithine site. Carbamoyl phosphate is bound by residues 267–268 (CL) and R295.

This sequence belongs to the aspartate/ornithine carbamoyltransferase superfamily. OTCase family.

It localises to the cytoplasm. It carries out the reaction carbamoyl phosphate + L-ornithine = L-citrulline + phosphate + H(+). Its pathway is amino-acid biosynthesis; L-arginine biosynthesis; L-arginine from L-ornithine and carbamoyl phosphate: step 1/3. Functionally, reversibly catalyzes the transfer of the carbamoyl group from carbamoyl phosphate (CP) to the N(epsilon) atom of ornithine (ORN) to produce L-citrulline. The sequence is that of Ornithine carbamoyltransferase from Caulobacter vibrioides (strain ATCC 19089 / CIP 103742 / CB 15) (Caulobacter crescentus).